Reading from the N-terminus, the 374-residue chain is MSNTKDNFNVADLTAALGAGDREDLVNALKNKLQDITGKPTNVLECLSPNVRKRVEVLKEIQSQHDELEAKFYEERAVLEAKYQKLYQPLYTKRFDIVNGVVEVNTSETEAAAMDQDEDEDAVGKGVPDFWLIAMKNNDVLSEEITERDEGALKFLKDIKWAKIDNPKGFKLEFFFDTNPYFTNTVLTKTYHMIDEDEPILEKALGTEIEWYPGKCLTQKILKKKPKKGSKNAKPITKTEQCESFFNFFSPPQVPEDEEDIDEDAAEELQSLMEQDYDIGSTIRDKIISHAVSWFTGEAAEDDFADLEDDDDDDEEDDDDEDEEEEDDEDDEDEEDEDDTNTKKKSSAVRKRGVRAHAPAGGQAGERPPECKQQ.

A coiled-coil region spans residues 26–80 (VNALKNKLQDITGKPTNVLECLSPNVRKRVEVLKEIQSQHDELEAKFYEERAVLE). A Nuclear export signal motif is present at residues 47–62 (LSPNVRKRVEVLKEIQ). Residues 223–228 (KKKPKK) carry the Nuclear localization signal motif. Acidic residues predominate over residues 299-339 (AAEDDFADLEDDDDDDEEDDDDEDEEEEDDEDDEDEEDEDD). Residues 299–374 (AAEDDFADLE…GERPPECKQQ (76 aa)) form a disordered region. The span at 343–355 (KKKSSAVRKRGVR) shows a compositional bias: basic residues. Residue cysteine 371 is modified to Cysteine methyl ester. Residue cysteine 371 is the site of S-farnesyl cysteine attachment. A propeptide spans 372-374 (KQQ) (removed in mature form).

Belongs to the nucleosome assembly protein (NAP) family. As to quaternary structure, binds preferentially histones H4 and H1 in vitro. Interacts with CYCB1;1.

It localises to the nucleus. The protein resides in the cytoplasm. In terms of biological role, may modulate chromatin structure by regulation of nucleosome assembly/disassembly. Could function together with B-type cyclins in the regulation of microtubule dynamics. This chain is Nucleosome assembly protein 1;1 (NAP1;1), found in Nicotiana tabacum (Common tobacco).